A 418-amino-acid polypeptide reads, in one-letter code: Serine hydroxymethyltransferase (418 aa).

Residues L121 and 125–127 (GHL) contribute to the (6S)-5,6,7,8-tetrahydrofolate site. K230 is subject to N6-(pyridoxal phosphate)lysine. (6S)-5,6,7,8-tetrahydrofolate is bound at residue 355–357 (SPF).

It belongs to the SHMT family. Homodimer. Requires pyridoxal 5'-phosphate as cofactor.

It is found in the cytoplasm. It catalyses the reaction (6R)-5,10-methylene-5,6,7,8-tetrahydrofolate + glycine + H2O = (6S)-5,6,7,8-tetrahydrofolate + L-serine. Its pathway is one-carbon metabolism; tetrahydrofolate interconversion. It functions in the pathway amino-acid biosynthesis; glycine biosynthesis; glycine from L-serine: step 1/1. Its function is as follows. Catalyzes the reversible interconversion of serine and glycine with tetrahydrofolate (THF) serving as the one-carbon carrier. This reaction serves as the major source of one-carbon groups required for the biosynthesis of purines, thymidylate, methionine, and other important biomolecules. Also exhibits THF-independent aldolase activity toward beta-hydroxyamino acids, producing glycine and aldehydes, via a retro-aldol mechanism. The polypeptide is Serine hydroxymethyltransferase (Alcanivorax borkumensis (strain ATCC 700651 / DSM 11573 / NCIMB 13689 / SK2)).